The chain runs to 276 residues: Ferrous iron permease EfeU (276 aa).

Position 1 (M1) is a topological domain, periplasmic. Residues 2-22 (FVPFLIMLREGLEAALIVSLI) traverse the membrane as a helical segment. Residues 23–34 (ASYLKRTQRGRW) are Cytoplasmic-facing. Residues 35–55 (IGVMWIGVLLAAALCLGLGIF) traverse the membrane as a helical segment. Over 56–69 (INETTGEFPQKEQE) the chain is Periplasmic. A helical transmembrane segment spans residues 70–90 (LFEGIVAVIAVVILTWMVFWM). At 91–118 (RKVSRNVKVQLEQAVDSALQRGNHHGWA) the chain is on the cytoplasmic side. A helical membrane pass occupies residues 119–139 (LVMMVFFAVAREGLESVFFLL). Residues 140–147 (AAFQQDVG) lie on the Periplasmic side of the membrane. Residues 148–168 (IWPPLGAMLGLATAVVLGFLL) traverse the membrane as a helical segment. Topologically, residues 169-179 (YWGGIRLNLGA) are cytoplasmic. Residues 180–200 (FFKWTSLFILFVAAGLAAGAI) traverse the membrane as a helical segment. The Periplasmic segment spans residues 201 to 244 (RAFHEAGLWNHFQEIAFDMSAVLSTHSLFGTLMEGIFGYQEAPS). A helical transmembrane segment spans residues 245–265 (VSEVAVWFIYLIPALVAFVLP). Topologically, residues 266-276 (PRAGATASRSV) are cytoplasmic.

This sequence belongs to the oxidase-dependent Fe transporter (OFeT) (TC 9.A.10.1) family. Part of a ferrous iron transporter composed of EfeU, EfeO and EfeB.

It localises to the cell inner membrane. Functionally, uptake of Fe(2+) ions across the membrane. The polypeptide is Ferrous iron permease EfeU (efeU) (Escherichia coli O6:K15:H31 (strain 536 / UPEC)).